The chain runs to 144 residues: Maximins 3/H9 type 2 (144 aa).

Residues 1–18 form the signal peptide; it reads MNFKYIVAVSFLIASAYA. Propeptides lie at residues 19–43 and 74–123; these read RSVQNDEQSLSQRDVLEEESLREIR and TAEE…KEKR. Ile-143 is modified (isoleucine amide).

It belongs to the bombinin family. Expressed by the skin glands.

It localises to the secreted. Functionally, maximin-3 shows antibacterial activity against both Gram-positive and Gram-negative bacteria. It also shows antimicrobial activity against the fungus C.albicans, but not against A.flavus nor P.uticale. It has little hemolytic activity. It possess a significant cytotoxicity against tumor cell lines. It possess a significant anti-HIV activity. It shows high spermicidal activity. Maximin-H9 shows antimicrobial activity against bacteria and against the fungus C.albicans. Shows strong hemolytic activity. In Bombina maxima (Giant fire-bellied toad), this protein is Maximins 3/H9 type 2.